The primary structure comprises 687 residues: MASPDAEDASPSPEYRSDLDDDMAAEQKTDDGSPSQKSSNGQKPASNAKDPLRPRRKKARRACFACQRAHLTCGDERPCTRCIKRGLQDHCMDGVRKKAKYLHDAPDGALMPGVGGHYPYMNGNRPTPLPSQDTHNVPMAPQGNMYTQAPSGTFYQPPSAQIPLPQAQHGRSFSDQQSPLSPPFSQAHHGPNVNPPSSISQGQPGQMQQFGPLFDPSDPALFNFDISSLNFGNHYGALEFGMLGHMSSAVDAPNDNTMMNAMNQTANMYGPQMAGAYGPNNPNAAMPFAQNSLPAGEWQESQSRQNSMHIHTPTSSATALDHGGHRHDSLNGPHAFAIGQGPSSHSTASPASTDASAFENDNPLSTATFFANTNRGQPQRSPTTNRHHQGNRPPSTALQPIHSNGVRKRHRDTKSIYQGIKKPFDYVKGYHRLFQICHKKFSKSLLAQAQQYLNLYRPVLLSVREEMDTDDLIHQEMGLQRNLMTLQDHFTEVGTPFLICRRSGEIVSCNKEFTILTGWRQDVLLGREPNLNVNLGNSREADESEMSTQTNTTPNLTGQEAETGTPAVNAIQLMDAKSALEYLQNFSELCWQDPHGHAKQRANMLRYQTKADFDRIQEMKANADHKSDAFVKMEGGAVHQGESAMQRLGAKNGMVDCMIWWHIKRDIFEMPVLVCMSVMPVLDKGLQ.

Residues Met1–Arg56 are disordered. Residues Gly32 to Ala45 show a composition bias toward polar residues. The zn(2)-C6 fungal-type DNA-binding region spans Cys63–Cys91. Composition is skewed to polar residues over residues Pro150–Ser159 and His169–Pro179. Disordered regions lie at residues Pro150 to Phe214, Glu300 to Arg411, and Gly536 to Ala561. The segment covering Pro195–Pro212 has biased composition (low complexity). The span at Glu300–Thr318 shows a compositional bias: polar residues. Over residues Pro342–Ala357 the composition is skewed to low complexity. Composition is skewed to polar residues over residues Asn362–Thr384, Arg392–His402, and Met546–Ala561. The region spanning Asn482–Thr553 is the PAS domain.

Belongs to the ERT1/acuK family.

The protein resides in the nucleus. In terms of biological role, transcription factor which regulates nonfermentable carbon utilization. Activator of gluconeogenetic genes. The protein is Transcription activator of gluconeogenesis SNOG_12336 of Phaeosphaeria nodorum (strain SN15 / ATCC MYA-4574 / FGSC 10173) (Glume blotch fungus).